A 154-amino-acid polypeptide reads, in one-letter code: Endoribonuclease YbeY (154 aa).

Residues histidine 114, histidine 118, and histidine 124 each contribute to the Zn(2+) site.

The protein belongs to the endoribonuclease YbeY family. Zn(2+) is required as a cofactor.

It is found in the cytoplasm. Functionally, single strand-specific metallo-endoribonuclease involved in late-stage 70S ribosome quality control and in maturation of the 3' terminus of the 16S rRNA. This chain is Endoribonuclease YbeY, found in Histophilus somni (strain 129Pt) (Haemophilus somnus).